Here is a 730-residue protein sequence, read N- to C-terminus: Elongation factor 2 (730 aa).

The tr-type G domain occupies 19 to 229 (DYIRNIGIVA…NITFKDIIQY (211 aa)). GTP-binding positions include 28–35 (AHIDHGKT), 94–98 (DTPGH), and 148–151 (NKVD). At His597 the chain carries Diphthamide.

This sequence belongs to the TRAFAC class translation factor GTPase superfamily. Classic translation factor GTPase family. EF-G/EF-2 subfamily.

The protein resides in the cytoplasm. In terms of biological role, catalyzes the GTP-dependent ribosomal translocation step during translation elongation. During this step, the ribosome changes from the pre-translocational (PRE) to the post-translocational (POST) state as the newly formed A-site-bound peptidyl-tRNA and P-site-bound deacylated tRNA move to the P and E sites, respectively. Catalyzes the coordinated movement of the two tRNA molecules, the mRNA and conformational changes in the ribosome. This chain is Elongation factor 2, found in Methanosphaera stadtmanae (strain ATCC 43021 / DSM 3091 / JCM 11832 / MCB-3).